The primary structure comprises 370 residues: mRNA cap guanine-N(7) methyltransferase 1 (370 aa).

The span at 1-11 (MKRGFSDSPSS) shows a compositional bias: low complexity. The disordered stretch occupies residues 1-34 (MKRGFSDSPSSSAPPPSSRFKSNPEGDSQFLEDE). Positions 61 to 341 (SPIIHLKKLN…LYLSFVLRKR (281 aa)) constitute an mRNA cap 0 methyltransferase domain. Position 70 to 71 (70 to 71 (NN)) interacts with mRNA. Residues Lys-74, Ala-92, Asp-114, 150–151 (DC), and 172–174 (QFA) contribute to the S-adenosyl-L-methionine site.

This sequence belongs to the class I-like SAM-binding methyltransferase superfamily. mRNA cap 0 methyltransferase family.

It is found in the nucleus. It carries out the reaction a 5'-end (5'-triphosphoguanosine)-ribonucleoside in mRNA + S-adenosyl-L-methionine = a 5'-end (N(7)-methyl 5'-triphosphoguanosine)-ribonucleoside in mRNA + S-adenosyl-L-homocysteine. In terms of biological role, mRNA-capping methyltransferase that methylates the N7 position of the added guanosine to the 5'-cap structure of mRNAs. Binds RNA containing 5'-terminal GpppC. The polypeptide is mRNA cap guanine-N(7) methyltransferase 1 (Arabidopsis thaliana (Mouse-ear cress)).